The chain runs to 374 residues: Fanconi anemia group F protein (374 aa).

In terms of assembly, belongs to the multisubunit FA complex composed of FANCA, FANCB, FANCC, FANCE, FANCF, FANCG, FANCL/PHF9 and FANCM. The complex is not found in FA patients. In complex with FANCA, FANCG and FANCL, but not with FANCC, nor FANCE, interacts with HES1; this interaction may be essential for the stability and nuclear localization of FA core complex proteins.

It is found in the nucleus. Functionally, DNA repair protein that may operate in a postreplication repair or a cell cycle checkpoint function. May be implicated in interstrand DNA cross-link repair and in the maintenance of normal chromosome stability. The sequence is that of Fanconi anemia group F protein (FANCF) from Homo sapiens (Human).